The following is a 184-amino-acid chain: MARIGDNPIPFGDEVTVSVDDHNVVTIEGPKGTLTEQIDPEMTLDIADDHVVVRRPTNQKRHRSLHGLSRSLIVNMVEGVTEGYKKELKIIGVGYRAQMSDETLEIALGYSHPIYFLPPSDVAVSVDSDRGQDDIIIVEGIDKELVGQVAAKIRSLRPPEPYKGKGVRYVDEHVPLKAGKTAAR.

It belongs to the universal ribosomal protein uL6 family. As to quaternary structure, part of the 50S ribosomal subunit.

Functionally, this protein binds to the 23S rRNA, and is important in its secondary structure. It is located near the subunit interface in the base of the L7/L12 stalk, and near the tRNA binding site of the peptidyltransferase center. The protein is Large ribosomal subunit protein uL6 of Salinibacter ruber (strain DSM 13855 / M31).